Reading from the N-terminus, the 155-residue chain is UPF0178 protein ACIAD2644 (155 aa).

A disordered region spans residues 120 to 155 (GAGVQTGGPPPISERDKREFSSALDQTILKQKRKTA).

This sequence belongs to the UPF0178 family.

The polypeptide is UPF0178 protein ACIAD2644 (Acinetobacter baylyi (strain ATCC 33305 / BD413 / ADP1)).